The sequence spans 294 residues: Endolytic peptidoglycan transglycosylase RlpA (294 aa).

Positions 1-23 (MKQKIFQILTALCCIFYVMSAQA) are cleaved as a signal peptide. The SPOR domain maps to 216–291 (EKYTTVYKIR…NYSKPLIVYT (76 aa)).

It belongs to the RlpA family.

Lytic transglycosylase with a strong preference for naked glycan strands that lack stem peptides. The protein is Endolytic peptidoglycan transglycosylase RlpA of Pasteurella multocida (strain Pm70).